Here is a 342-residue protein sequence, read N- to C-terminus: Prenyl transferase ptmC (342 aa).

A helical membrane pass occupies residues 17-37 (LSFLTLTVGALALIVVLYISI). An isopentenyl diphosphate-binding site is contributed by histidine 110. Mg(2+) is bound by residues aspartate 117 and aspartate 121. Arginine 126 contacts dimethylallyl diphosphate. N-linked (GlcNAc...) asparagine glycosylation occurs at asparagine 154. Lysine 210, threonine 211, glutamine 240, asparagine 247, and lysine 257 together coordinate dimethylallyl diphosphate.

This sequence belongs to the FPP/GGPP synthase family.

It localises to the membrane. It participates in secondary metabolite biosynthesis. In terms of biological role, prenyl transferase; part of the gene cluster that mediates the biosynthesis of the indole diterpenes penitrems. The geranylgeranyl diphosphate (GGPP) synthase ptmG catalyzes the first step in penitrem biosynthesis via conversion of farnesyl pyrophosphate and isopentyl pyrophosphate into geranylgeranyl pyrophosphate (GGPP). Condensation of indole-3-glycerol phosphate with GGPP by the prenyl transferase ptmC then forms 3-geranylgeranylindole (3-GGI). Epoxidation by the FAD-dependent monooxygenase ptmM leads to a epoxidized-GGI that is substrate of the terpene cyclase ptmB for cyclization to yield paspaline. Paspaline is subsequently converted to 13-desoxypaxilline by the cytochrome P450 monooxygenase ptmP, the latter being then converted to paxilline by the cytochrome P450 monooxygenase ptmQ. Paxilline is converted to beta-paxitriol via C-10 ketoreduction by the short-chain dehydrogenase ptmH which can be monoprenylated at the C-20 by the indole diterpene prenyltransferase ptmD. A two-step elimination (acetylation and elimination) process performed by the O-acetyltransferase ptmV and ptmI leads to the production of the prenylated form of penijanthine. The FAD-linked oxidoreductase ptmO then converts the prenylated form of penijanthine into PC-M5 which is in turn transformed into PC-M4 by the aromatic dimethylallyltransferase ptmE. Five sequential oxidative transformations performed by the cytochrome P450 monooxygenases ptmK, ptmU, ptmL, ptmN and ptmJ yield the various penitrem compounds. PtmK, ptmU and ptmM are involved in the formation of the key bicyclic ring of penitrem C via the formation of the intermediates secopenitrem D and penitrem D. PtmL catalyzes the epoxidation of penitrem D and C to yield penitrem B and F, respectively. PtmJ catalyzes the last benzylic hydroxylation to convert penitrem B to prenitrem E and penitrem F to penitrem A. This is Prenyl transferase ptmC from Penicillium ochrochloron.